The chain runs to 364 residues: Lipoyl synthase, mitochondrial (364 aa).

Residues Cys-99, Cys-104, Cys-110, Cys-130, Cys-134, Cys-137, and Ser-345 each contribute to the [4Fe-4S] cluster site. Residues 116-334 (HSTQTATIML…EQRGNELGFL (219 aa)) enclose the Radical SAM core domain.

This sequence belongs to the radical SAM superfamily. Lipoyl synthase family. The cofactor is [4Fe-4S] cluster.

It localises to the mitochondrion. It catalyses the reaction [[Fe-S] cluster scaffold protein carrying a second [4Fe-4S](2+) cluster] + N(6)-octanoyl-L-lysyl-[protein] + 2 oxidized [2Fe-2S]-[ferredoxin] + 2 S-adenosyl-L-methionine + 4 H(+) = [[Fe-S] cluster scaffold protein] + N(6)-[(R)-dihydrolipoyl]-L-lysyl-[protein] + 4 Fe(3+) + 2 hydrogen sulfide + 2 5'-deoxyadenosine + 2 L-methionine + 2 reduced [2Fe-2S]-[ferredoxin]. Its pathway is protein modification; protein lipoylation via endogenous pathway; protein N(6)-(lipoyl)lysine from octanoyl-[acyl-carrier-protein]: step 2/2. Its function is as follows. Catalyzes the radical-mediated insertion of two sulfur atoms into the C-6 and C-8 positions of the octanoyl moiety bound to the lipoyl domains of lipoate-dependent enzymes, thereby converting the octanoylated domains into lipoylated derivatives. This is Lipoyl synthase, mitochondrial from Drosophila mojavensis (Fruit fly).